The sequence spans 212 residues: Probable nicotinate-nucleotide adenylyltransferase (212 aa).

It belongs to the NadD family.

It carries out the reaction nicotinate beta-D-ribonucleotide + ATP + H(+) = deamido-NAD(+) + diphosphate. The protein operates within cofactor biosynthesis; NAD(+) biosynthesis; deamido-NAD(+) from nicotinate D-ribonucleotide: step 1/1. Catalyzes the reversible adenylation of nicotinate mononucleotide (NaMN) to nicotinic acid adenine dinucleotide (NaAD). The sequence is that of Probable nicotinate-nucleotide adenylyltransferase from Mycobacterium avium (strain 104).